We begin with the raw amino-acid sequence, 520 residues long: Nucleolar protein 12 (520 aa).

Disordered regions lie at residues 1-29 and 41-185; these read MGKK…NVSV and AGPV…DDDE. The span at 78–95 shows a compositional bias: acidic residues; sequence ASEDQFMEDAPESPDAAE. Over residues 120-132 the composition is skewed to basic and acidic residues; that stretch reads SYMRRLAKEEQKE. A compositionally biased stretch (acidic residues) spans 144 to 168; that stretch reads LEEESEDGEKESPQSEDGESEDEGA. RRM domains follow at residues 191 to 303 and 311 to 421; these read RTVF…NVAH and RCVF…RAKK. The tract at residues 472 to 520 is disordered; it reads EGNRATADGSSRIRVRTKSRGSKAKKDSRSKKRAAAYKAAGGKKAKIGK. Residues 484 to 520 show a composition bias toward basic residues; sequence IRVRTKSRGSKAKKDSRSKKRAAAYKAAGGKKAKIGK.

The protein belongs to the RRM RBM34 family.

It is found in the nucleus. The protein resides in the nucleolus. Its function is as follows. Involved in pre-25S rRNA processing. The sequence is that of Nucleolar protein 12 (nop12) from Emericella nidulans (strain FGSC A4 / ATCC 38163 / CBS 112.46 / NRRL 194 / M139) (Aspergillus nidulans).